The chain runs to 365 residues: Iron-sulfur cluster assembly protein SufC (365 aa).

The 247-residue stretch at 118–364 folds into the ABC transporter domain; it reads LEINDLHAIE…ESDGYAQFVE (247 aa). 152–159 provides a ligand contact to ATP; the sequence is GRNGSGKS.

It belongs to the ABC transporter superfamily. Ycf16 family. In terms of assembly, component of a complex composed of SufB, SufC and SufD in a stoichiometric ratio of 1:2:1. Interacts with SufB. Interacts with SufD; the interaction enhances the ATPase activity of SufC.

The protein localises to the plastid. Its subcellular location is the apicoplast. The enzyme catalyses ATP + H2O = ADP + phosphate + H(+). The protein operates within cofactor biosynthesis; iron-sulfur cluster biosynthesis. Participates in the sulfur mobilization (SUF) pathway for iron-sulfur (Fe-S) cluster biogenesis. As part of a complex consisting of SufB-SufC(2)-SufD, involved in assembly of [4Fe-4S] clusters. Exhibits ATPase activity. The sequence is that of Iron-sulfur cluster assembly protein SufC from Plasmodium berghei (strain Anka).